Here is a 147-residue protein sequence, read N- to C-terminus: Hemoglobin subunit gamma (147 aa).

In terms of domain architecture, Globin spans 3–147 (YFTAEEKAAI…VASALARKYH (145 aa)). Heme b is bound by residues H64 and H93.

The protein belongs to the globin family. As to quaternary structure, heterotetramer of two alpha chains and two gamma chains in fetal hemoglobin (Hb F). In terms of tissue distribution, red blood cells.

Gamma chains make up the fetal hemoglobin F, in combination with alpha chains. This Dugong dugon (Dugong) protein is Hemoglobin subunit gamma (HBG).